A 5068-amino-acid polypeptide reads, in one-letter code: Protein piccolo (5068 aa).

Over residues 1-20 the composition is skewed to low complexity; sequence MGNEASLEGEGLPEGLAAAA. Disordered stretches follow at residues 1 to 143 and 173 to 524; these read MGNE…DFKE and FDLI…QAPA. A compositionally biased stretch (pro residues) spans 93-102; it reads PGKPPDPGRP. Composition is skewed to basic and acidic residues over residues 111–122, 133–143, and 185–199; these read RTTDTFRSEQKL, KESKSRTDFKE, and ETTKKQKVAQKDQGK. S212 carries the phosphoserine modification. Residues 232 to 241 show a composition bias toward polar residues; sequence PSKSVSSQQA. The segment covering 252-279 has biased composition (low complexity); the sequence is AKPSQQSPAQTPAQQAKPVAQQPGPAKA. Positions 319 to 334 are enriched in polar residues; sequence TSLQQPGPKSLAQTPG. Composition is skewed to pro residues over residues 391–407 and 416–487; these read PTKPSPQQPIPAKPQPQ and PQQP…PQPQ. The tract at residues 401–500 is 10 X 10 AA tandem approximate repeats of P-A-K-P-Q-P-Q-Q-P-X; sequence PAKPQPQQPV…LGKPSAQQPS (100 aa). Over residues 495 to 508 the composition is skewed to polar residues; the sequence is SAQQPSKSISQTVT. Over residues 515 to 524 the composition is skewed to low complexity; that stretch reads PPTSAAQAPA. The C4-type zinc finger occupies 532-556; it reads CPLCNTTELLLHTPEKANFNTCTEC. Disordered regions lie at residues 594 to 867, 883 to 1005, 1057 to 1345, and 1364 to 1803; these read AAIP…TVTG, LIST…TELN, LGDM…PSDL, and VGEK…SDPE. The span at 610 to 625 shows a compositional bias: polar residues; that stretch reads QPATASKSPVPSQQAS. Residues 626–644 show a composition bias toward basic and acidic residues; sequence PKKELPSKQDSPKAPESKK. Residues 709 to 738 show a composition bias toward low complexity; that stretch reads SPSSAAATSKPAILSSQVQAQAQVTTAPPL. Residues 782 to 795 show a composition bias toward basic and acidic residues; the sequence is ESKDPVQKKEEPKK. The segment covering 809–830 has biased composition (low complexity); sequence VPKGSPTPSGTRPTTGQATPQS. 2 positions are modified to phosphoserine: S844 and S856. 2 stretches are compositionally biased toward polar residues: residues 856–865 and 883–893; these read SQPTTPQETV and LISTAGQQAPH. T860 bears the Phosphothreonine mark. The segment at 997–1020 adopts a C4-type zinc-finger fold; that stretch reads CPLCRTELNVGSQDPPNFNTCTEC. Residues 1073–1085 show a composition bias toward pro residues; sequence SPVPAPAEPPPQK. Residues 1097-1116 show a composition bias toward basic and acidic residues; sequence KETEVKAETEKQIPEKETPS. At T1120 the chain carries Phosphothreonine. Basic and acidic residues-rich tracts occupy residues 1144–1165, 1172–1186, 1244–1253, and 1262–1283; these read PEKKPSEEEKALPADKKEKKPP, LEEKKPIPDDQKLPP, PKDRQKESRD, and TAKEGRGEPSKDRTEKEEDKSD. Positions 1290-1306 are enriched in polar residues; sequence PKSPQGLSDTGYSSDGI. Phosphoserine occurs at positions 1292, 1302, 1303, 1332, 1334, 1337, 1338, and 1341. The span at 1319–1333 shows a compositional bias: basic and acidic residues; that stretch reads SDEKDLLKGLKKDSF. The span at 1334–1343 shows a compositional bias: low complexity; that stretch reads SQESSPSSPS. The segment covering 1374–1392 has biased composition (polar residues); that stretch reads PQKVSPEQPQDQQKTQTPS. The segment covering 1405 to 1444 has biased composition (basic and acidic residues); the sequence is KESQEKKVTSKKDSAQGFPSRKEHKENPELVDDLSPRRAS. A phosphoserine mark is found at S1439, S1451, S1452, S1454, S1457, S1481, S1484, S1505, and S1507. Over residues 1499–1511 the composition is skewed to acidic residues; the sequence is SADEDASGSEDEE. T1552 is modified (phosphothreonine). S1553, S1563, and S1575 each carry phosphoserine. The span at 1566–1575 shows a compositional bias: acidic residues; it reads DEDDETFDES. Basic and acidic residues predominate over residues 1576 to 1587; sequence PELKFRETKSQE. The segment covering 1606–1624 has biased composition (polar residues); it reads ELNSTVTDKYSAESSQKKT. Over residues 1628–1638 the composition is skewed to acidic residues; it reads FDEEPELEMES. The residue at position 1638 (S1638) is a Phosphoserine. Residue T1640 is modified to Phosphothreonine. S1642 and S1647 each carry phosphoserine. Positions 1650–1667 are enriched in polar residues; that stretch reads EGSSSLHASSFTPGTSPT. Positions 1707–1720 are enriched in acidic residues; the sequence is DSSEEEELREEEEL. 2 positions are modified to phosphoserine: S1708 and S1709. Positions 1721–1734 are enriched in basic and acidic residues; that stretch reads LKEQEKQRELEQQQ. T1760 bears the Phosphothreonine mark. S1766 carries the phosphoserine modification. Positions 1775 to 1790 are enriched in basic and acidic residues; the sequence is EELRQAAEMEELHRSS. Phosphoserine is present on residues S1795, S1800, S1808, and S1829. Disordered stretches follow at residues 2104-2126 and 2261-2377; these read PSESATSVPPSDTPSLTSSISSV and EAEL…AAAA. The span at 2109–2126 shows a compositional bias: low complexity; the sequence is TSVPPSDTPSLTSSISSV. The span at 2277–2291 shows a compositional bias: polar residues; it reads TPSSQTKEQPGSPHS. Residues 2334–2368 are compositionally biased toward pro residues; it reads QPPPPPPPPPPPPPPPPPPPPPPLPPATSPKPPTY. At S2495 the chain carries Phosphoserine. O-linked (GlcNAc) threonine glycosylation occurs at T2686. O-linked (GlcNAc) serine glycosylation is present at S2960. Residue T2998 is modified to Phosphothreonine. Disordered regions lie at residues 3334–3443 and 3490–3556; these read KEEK…SKVS and KGGS…LYSP. At S3358 the chain carries Phosphoserine. Over residues 3361 to 3370 the composition is skewed to basic and acidic residues; the sequence is DDPRNLKKIV. S3372 bears the Phosphoserine mark. A phosphothreonine mark is found at T3376 and T3403. The span at 3403 to 3412 shows a compositional bias: acidic residues; the sequence is TDDEDQDEWD. Over residues 3495–3507 the composition is skewed to polar residues; sequence GCQTETDPDTQSP. Phosphoserine is present on residues S3506, S3514, S3545, S3549, S3555, S3558, S3561, S3582, S3608, S3610, and S3616. Disordered regions lie at residues 3576–3679 and 3760–3797; these read PLPD…RRRM and DYMSDSEVSSTRPSRVESQHGIERPRTAPQTEFSQFIP. 2 stretches are compositionally biased toward polar residues: residues 3636–3645 and 3661–3673; these read KGSQTTSGTQ and STGTQSTYSTMGT. S3763 is modified (phosphoserine). Basic and acidic residues predominate over residues 3773 to 3785; sequence SRVESQHGIERPR. Polar residues predominate over residues 3787–3797; the sequence is APQTEFSQFIP. S4016, S4042, and S4132 each carry phosphoserine. Disordered regions lie at residues 4207–4231 and 4254–4273; these read ADKPYSSGSRSRPSSRPSSVYGLDL and VSFGHSSSSARTKPTSLPIS. Residues 4210 to 4231 show a composition bias toward low complexity; it reads PYSSGSRSRPSSRPSSVYGLDL. Positions 4257 to 4273 are enriched in polar residues; it reads GHSSSSARTKPTSLPIS. Phosphoserine is present on residues S4286, S4290, S4293, S4322, and S4358. The tract at residues 4317–4339 is disordered; sequence RDQFGSSHSLPEVQQHMREESRT. Positions 4424–4518 constitute a PDZ domain; it reads RIKITRDSKD…EAEICVRLDL (95 aa). The disordered stretch occupies residues 4574–4620; sequence KGAHAHSGPTSAGSSSVPSPGQPGSPSVSKKKHGGSKPTDVSKTASH. A compositionally biased stretch (low complexity) spans 4578–4601; sequence AHSGPTSAGSSSVPSPGQPGSPSV. The residue at position 4592 (S4592) is a Phosphoserine. Residues 4622–4751 form the C2 1 domain; sequence ITGEIQLQIN…SHLDNTPRWY (130 aa). D4651 and D4657 together coordinate Ca(2+). S4706 is subject to Phosphoserine. Ca(2+) is bound by residues D4721, D4723, S4726, and D4729. Disordered stretches follow at residues 4758–4834 and 4857–4891; these read ESIE…SVAQ and QPTKPTNHRPAETSVSTGSSGSSVGSGYSVDSEGS. Composition is skewed to low complexity over residues 4766 to 4778 and 4805 to 4815; these read HSSQNSQQSPKPS and SSPGSSKSSSE. The segment covering 4823–4834 has biased composition (polar residues); sequence PSRSQSKTSVAQ. The span at 4870–4891 shows a compositional bias: low complexity; sequence SVSTGSSGSSVGSGYSVDSEGS. The region spanning 4933–5058 is the C2 2 domain; that stretch reads VMGEIKLALK…DLRKRIVNWH (126 aa).

Interacts with BSN, ERC2/CAST1, RIMS1 and UNC13A. Interacts (via C-terminus) with TRIO (via N-terminus). Interacts with CTBP1. Interacts with SIAH1; this interaction negatively regulates SIAH1 E3 ligase activity. Directly interacts with GIT1 and GIT2. Requires Ca(2+) as cofactor. As to expression, highly expressed in brain. Moderately expressed in pituitary gland and pancreatic islets. Low levels found in stomach.

It localises to the presynaptic active zone. In terms of biological role, scaffold protein of the presynaptic cytomatrix at the active zone (CAZ) which is the place in the synapse where neurotransmitter is released. After synthesis, participates in the formation of Golgi-derived membranous organelles termed Piccolo-Bassoon transport vesicles (PTVs) that are transported along axons to sites of nascent synaptic contacts. At the presynaptic active zone, regulates the spatial organization of synaptic vesicle cluster, the protein complexes that execute membrane fusion and compensatory endocytosis. Organizes as well the readily releasable pool of synaptic vesicles and safeguards a fraction of them to be not immediately available for action potential-induced release. Also functions in processes other than assembly such as the regulation of specific presynaptic protein ubiquitination by interacting with SIAH1 or the regulation of presynaptic autophagy. Also mediates synapse to nucleus communication leading to reconfiguration of gene expression by associating with the transcriptional corepressor CTBP1 and by subsequently reducing the size of its pool available for nuclear import. This chain is Protein piccolo, found in Mus musculus (Mouse).